We begin with the raw amino-acid sequence, 338 residues long: Mitoferrin-1 (338 aa).

The interval 1–37 (MELRRGGVGNQAAGRRMDGDCRDGGCGSKDAGSEDYE) is disordered. 3 Solcar repeats span residues 43 to 131 (ASVS…MKRT), 141 to 225 (NSHL…LQEQ), and 232 to 326 (YNPQ…FKYI). Transmembrane regions (helical) follow at residues 45–64 (VSTH…SIMY), 106–125 (GLNV…FACY), 143–162 (HLAN…AVMN), 200–219 (SYTT…FITY), 234–253 (PQSH…AATT), and 301–320 (GIQA…WSVY).

This sequence belongs to the mitochondrial carrier (TC 2.A.29) family. As to quaternary structure, interacts with ACB10; this interaction stabilizes SLC25A37 and enhances the function of SLC25A37 to import mitochondrial iron during erythroid differentiation. In terms of tissue distribution, highly expressed in hematopoietic organs, fetal liver, bone marrow and spleen.

It localises to the mitochondrion inner membrane. It catalyses the reaction Fe(2+)(in) = Fe(2+)(out). Its function is as follows. Mitochondrial iron transporter that specifically mediates iron uptake in developing erythroid cells, thereby playing an essential role in heme biosynthesis. The sequence is that of Mitoferrin-1 (Slc25a37) from Mus musculus (Mouse).